The primary structure comprises 87 residues: Small ribosomal subunit protein bS20 (87 aa).

A disordered region spans residues 1 to 29; that stretch reads MANTAQARKRARQAVKQNAHNSSQRSTLR. Over residues 20-29 the composition is skewed to polar residues; sequence HNSSQRSTLR.

This sequence belongs to the bacterial ribosomal protein bS20 family.

Its function is as follows. Binds directly to 16S ribosomal RNA. The protein is Small ribosomal subunit protein bS20 of Herminiimonas arsenicoxydans.